The sequence spans 756 residues: Ent-kaurene synthase, chloroplastic (756 aa).

2 residues coordinate Mg(2+): Asp-507 and Asp-511. The short motif at 507–511 (DDFFD) is the DDXXD motif element. The helical transmembrane segment at 606 to 622 (YVSFALGPIVLPCLYLV) threads the bilayer. Residues Asn-651, Thr-655, and Glu-659 each contribute to the Mg(2+) site.

Belongs to the terpene synthase family. It depends on Mg(2+) as a cofactor. Present in both leaves and flowers.

Its subcellular location is the plastid. It is found in the chloroplast membrane. The catalysed reaction is ent-copalyl diphosphate = ent-kaur-16-ene + diphosphate. Its pathway is plant hormone biosynthesis; gibberellin biosynthesis. Involved in the biosynthesis of labdane-type diterpenoid including marrubiin and other labdane-related furanoid diterpenoids with potential applications as anti-diabetics, analgesics or vasorelaxants. Terpene synthase that produces ent-kaurene from ent-copalyl diphosphate (ent-CPP). The protein is Ent-kaurene synthase, chloroplastic of Marrubium vulgare (White horehound).